The following is a 184-amino-acid chain: Major urinary protein 3 (184 aa).

The N-terminal stretch at 1–22 is a signal peptide; that stretch reads MKLLLPLLLLLCLELTLVCIHA. An N-linked (GlcNAc...) asparagine glycan is attached at Asn66. An intrachain disulfide couples Cys86 to Cys179.

It belongs to the calycin superfamily. Lipocalin family. Glycosylated. As to expression, abundant in the urine of adult male mice but absent from that of females.

The protein localises to the secreted. In terms of biological role, binds pheromones that are released from drying urine of males. These pheromones affect the sexual behavior of females. The sequence is that of Major urinary protein 3 (Mup3) from Mus musculus (Mouse).